The sequence spans 493 residues: 3-octaprenyl-4-hydroxybenzoate carboxy-lyase (493 aa).

Residue Asn-172 coordinates Mn(2+). Residues 175–177 (IYR), 189–191 (RWL), and 194–195 (RG) each bind prenylated FMN. A Mn(2+)-binding site is contributed by Glu-238. The active-site Proton donor is Asp-287.

Belongs to the UbiD family. Homohexamer. Prenylated FMN is required as a cofactor. Mn(2+) serves as cofactor.

The protein resides in the cell membrane. It catalyses the reaction a 4-hydroxy-3-(all-trans-polyprenyl)benzoate + H(+) = a 2-(all-trans-polyprenyl)phenol + CO2. Its pathway is cofactor biosynthesis; ubiquinone biosynthesis. Its function is as follows. Catalyzes the decarboxylation of 3-octaprenyl-4-hydroxy benzoate to 2-octaprenylphenol, an intermediate step in ubiquinone biosynthesis. The chain is 3-octaprenyl-4-hydroxybenzoate carboxy-lyase from Shewanella sp. (strain MR-4).